The chain runs to 206 residues: Pyridoxal 5'-phosphate synthase subunit PdxT (206 aa).

59–61 (GES) contributes to the L-glutamine binding site. Cys91 serves as the catalytic Nucleophile. L-glutamine-binding positions include Arg123 and 151–152 (IR). Active-site charge relay system residues include His187 and Glu189.

The protein belongs to the glutaminase PdxT/SNO family. In the presence of PdxS, forms a dodecamer of heterodimers. Only shows activity in the heterodimer.

It carries out the reaction aldehydo-D-ribose 5-phosphate + D-glyceraldehyde 3-phosphate + L-glutamine = pyridoxal 5'-phosphate + L-glutamate + phosphate + 3 H2O + H(+). It catalyses the reaction L-glutamine + H2O = L-glutamate + NH4(+). It functions in the pathway cofactor biosynthesis; pyridoxal 5'-phosphate biosynthesis. Catalyzes the hydrolysis of glutamine to glutamate and ammonia as part of the biosynthesis of pyridoxal 5'-phosphate. The resulting ammonia molecule is channeled to the active site of PdxS. This chain is Pyridoxal 5'-phosphate synthase subunit PdxT, found in Mycobacterium sp. (strain JLS).